A 517-amino-acid polypeptide reads, in one-letter code: Ribonuclease Y (517 aa).

The helical transmembrane segment at Met-1–Val-21 threads the bilayer. The 67-residue stretch at Leu-207–Asp-273 folds into the KH domain. The HD domain occupies Ala-333–Ala-426.

Belongs to the RNase Y family.

It localises to the cell membrane. Functionally, endoribonuclease that initiates mRNA decay. The polypeptide is Ribonuclease Y (Campylobacter fetus subsp. fetus (strain 82-40)).